The following is an 82-amino-acid chain: Colonization factor (82 aa).

An N-terminal signal peptide occupies residues 1-33; sequence MFSSLKNKLNTFKSTLSLGVFLLFSAFANQALA.

The protein localises to the secreted. The chain is Colonization factor (cep) from Vibrio cholerae serotype O1 (strain ATCC 39315 / El Tor Inaba N16961).